The following is a 496-amino-acid chain: 4-O-methyl-glucuronoyl methylesterase 1 (496 aa).

The N-terminal stretch at 1 to 19 is a signal peptide; it reads MKSTVASALLVLAGTAVQA. Residues 20–55 enclose the CBM1 domain; sequence QSGPWQQCGGIGWQGPFTCVSGHTCQVLNDWYHQCV. The disordered stretch occupies residues 57–151; that stretch reads GGGPSPPPTS…RLPDPFTFHN (95 aa). The span at 59–125 shows a compositional bias: pro residues; it reads GPSPPPTSPP…SPPPTSPPPS (67 aa). Intrachain disulfides connect cysteine 129–cysteine 163, cysteine 307–cysteine 443, and cysteine 339–cysteine 415. Residues 306-311 carry the GXSYXG catalytic site motif motif; that stretch reads GCSRNG. Serine 308 functions as the Nucleophile in the catalytic mechanism. Substrate-binding residues include lysine 312, glutamine 354, glutamate 362, and tryptophan 406. The active-site Proton donor/acceptor is histidine 442.

It belongs to the carbohydrate esterase 15 (CE15) family.

It localises to the secreted. It carries out the reaction a 4-O-methyl-alpha-D-glucuronosyl ester derivative + H2O = 4-O-methyl-alpha-D-glucuronate derivative + an alcohol + H(+). Functionally, glucuronoyl esterase which may play a significant role in biomass degradation, as it is considered to disconnect hemicellulose from lignin through the hydrolysis of the ester bond between 4-O-methyl-D-glucuronic acid residues of glucuronoxylans and aromatic alcohols of lignin. Cleaves native lignin-carbohydrate (LC) ester bonds from LC complex preparations of spruce (softwood) and birch (hardwood), containing mainly hemicelluloses with partially acetylated glucomannans in spruce and partially acetylated xylan in birch. Can hydrolyze benzyl glucuronic acid (BnGlcA), allyl glucuronic acid (allylGlcA) and to a lower degree methyl glucuronic acid (MeGlcA) in vitro. The sequence is that of 4-O-methyl-glucuronoyl methylesterase 1 from Sodiomyces alcalophilus (Acremonium alcalophilum).